The sequence spans 548 residues: Probable malate:quinone oxidoreductase (548 aa).

Residues 522-548 (KPQAADSTPKPQLKPKPVQKEVADIAL) are disordered. The segment covering 539-548 (VQKEVADIAL) has biased composition (basic and acidic residues).

The protein belongs to the MQO family. It depends on FAD as a cofactor.

It carries out the reaction (S)-malate + a quinone = a quinol + oxaloacetate. It functions in the pathway carbohydrate metabolism; tricarboxylic acid cycle; oxaloacetate from (S)-malate (quinone route): step 1/1. In Escherichia coli O9:H4 (strain HS), this protein is Probable malate:quinone oxidoreductase.